The chain runs to 164 residues: Putative pre-16S rRNA nuclease (164 aa).

This sequence belongs to the YqgF nuclease family.

Its subcellular location is the cytoplasm. Could be a nuclease involved in processing of the 5'-end of pre-16S rRNA. The sequence is that of Putative pre-16S rRNA nuclease from Synechococcus sp. (strain CC9902).